Here is a 683-residue protein sequence, read N- to C-terminus: Hexamerin 70b (683 aa).

The N-terminal stretch at 1 to 21 (MIVIMKAGFLFLASLCLLVQA) is a signal peptide. In terms of domain architecture, Hemocyanin N-terminal spans 32–153 (VTRQKNIYEL…VAVIHRPDTK (122 aa)). In terms of domain architecture, Hemocyanin middle spans 159–428 (PMYEVMPHLY…SIYKTILDYY (270 aa)). Asparagine 203 is a glycosylation site (N-linked (GlcNAc...) asparagine). The region spanning 437–673 (KYTTEELNFP…IHVKEVLVHH (237 aa)) is the Hemocyanin C-terminal domain.

The protein belongs to the hemocyanin/hexamerin family. Probable homohexamer. In terms of tissue distribution, expressed in the fat body and secreted into the hemolymph (at protein level). Present in trophocytes and oenocytes of the fat body (at protein level).

It localises to the secreted. The protein localises to the nucleus. It is found in the cytoplasm. The protein resides in the cytoplasmic granule. Its function is as follows. Storage protein that may function as a nutrient supply to compensate for lack of dietary proteins during metamorphosis and egg production. The sequence is that of Hexamerin 70b from Apis mellifera (Honeybee).